Reading from the N-terminus, the 100-residue chain is Small ribosomal subunit protein bS18c (100 aa).

The interval 81–100 (KQFERTESTPRTTGPRTRKK) is disordered. Residues 89-100 (TPRTTGPRTRKK) show a composition bias toward low complexity.

The protein belongs to the bacterial ribosomal protein bS18 family. As to quaternary structure, part of the 30S ribosomal subunit.

It localises to the plastid. Its subcellular location is the chloroplast. This is Small ribosomal subunit protein bS18c from Nandina domestica (Heavenly bamboo).